Reading from the N-terminus, the 620-residue chain is Dihydroxy-acid dehydratase (620 aa).

Asp82 is a binding site for Mg(2+). A [2Fe-2S] cluster-binding site is contributed by Cys123. Asp124 and Lys125 together coordinate Mg(2+). Lys125 is modified (N6-carboxylysine). Cys197 is a [2Fe-2S] cluster binding site. Glu493 provides a ligand contact to Mg(2+). Ser519 (proton acceptor) is an active-site residue.

The protein belongs to the IlvD/Edd family. As to quaternary structure, homodimer. Requires [2Fe-2S] cluster as cofactor. The cofactor is Mg(2+).

The catalysed reaction is (2R)-2,3-dihydroxy-3-methylbutanoate = 3-methyl-2-oxobutanoate + H2O. It carries out the reaction (2R,3R)-2,3-dihydroxy-3-methylpentanoate = (S)-3-methyl-2-oxopentanoate + H2O. It functions in the pathway amino-acid biosynthesis; L-isoleucine biosynthesis; L-isoleucine from 2-oxobutanoate: step 3/4. The protein operates within amino-acid biosynthesis; L-valine biosynthesis; L-valine from pyruvate: step 3/4. Functions in the biosynthesis of branched-chain amino acids. Catalyzes the dehydration of (2R,3R)-2,3-dihydroxy-3-methylpentanoate (2,3-dihydroxy-3-methylvalerate) into 2-oxo-3-methylpentanoate (2-oxo-3-methylvalerate) and of (2R)-2,3-dihydroxy-3-methylbutanoate (2,3-dihydroxyisovalerate) into 2-oxo-3-methylbutanoate (2-oxoisovalerate), the penultimate precursor to L-isoleucine and L-valine, respectively. The polypeptide is Dihydroxy-acid dehydratase (Bifidobacterium longum subsp. infantis (strain ATCC 15697 / DSM 20088 / JCM 1222 / NCTC 11817 / S12)).